The sequence spans 205 residues: Thymidine kinase (205 aa).

Residues 9–16 (SAMNAGKS) and 87–90 (DECQ) contribute to the ATP site. The active-site Proton acceptor is glutamate 88. Zn(2+) is bound by residues cysteine 145, cysteine 147, cysteine 182, and histidine 185.

Belongs to the thymidine kinase family. As to quaternary structure, homotetramer.

Its subcellular location is the cytoplasm. The catalysed reaction is thymidine + ATP = dTMP + ADP + H(+). With respect to regulation, allosteric enzyme which is feedback inhibited by dTTP and activated by a number of dNDP and dNTP. Its function is as follows. Phosphorylates both thymidine and deoxyuridine. The chain is Thymidine kinase from Escherichia coli O157:H7.